Here is a 135-residue protein sequence, read N- to C-terminus: ATP synthase epsilon chain (135 aa).

The interval 101 to 122 (TAVTKLEGQPSTPEKVKAQQLF) is disordered.

This sequence belongs to the ATPase epsilon chain family. As to quaternary structure, F-type ATPases have 2 components, CF(1) - the catalytic core - and CF(0) - the membrane proton channel. CF(1) has five subunits: alpha(3), beta(3), gamma(1), delta(1), epsilon(1). CF(0) has three main subunits: a, b and c.

The protein localises to the cellular thylakoid membrane. Its function is as follows. Produces ATP from ADP in the presence of a proton gradient across the membrane. In Synechococcus sp. (strain CC9311), this protein is ATP synthase epsilon chain.